A 176-amino-acid polypeptide reads, in one-letter code: Disulfide bond formation protein B (176 aa).

Residues 1–14 lie on the Cytoplasmic side of the membrane; that stretch reads MLRFLNQCSQGRGA. The helical transmembrane segment at 15–31 threads the bilayer; that stretch reads WLLMAFTALALELTALW. The Periplasmic portion of the chain corresponds to 32 to 49; the sequence is FQHVMLLKPCVLCIYERC. Cys41 and Cys44 are disulfide-bonded. Residues 50 to 65 form a helical membrane-spanning segment; sequence ALFGVLGAALIGAIAP. The Cytoplasmic portion of the chain corresponds to 66–71; it reads KTPLRY. A helical transmembrane segment spans residues 72–89; that stretch reads VAMVIWLYSAFRGVQLTY. Topologically, residues 90 to 144 are periplasmic; sequence EHTMLQLYPSPFATCDFMVRFPEWLPLDKWVPQVFVASGDCAERQWDFLGLEMPQ. Residues Cys104 and Cys130 are joined by a disulfide bond. The helical transmembrane segment at 145–163 threads the bilayer; the sequence is WLLGIFIAYLIVAVLVMIS. The Cytoplasmic segment spans residues 164–176; it reads QPFKAKKRDLFGR.

This sequence belongs to the DsbB family.

It is found in the cell inner membrane. In terms of biological role, required for disulfide bond formation in some periplasmic proteins. Acts by oxidizing the DsbA protein. This Shigella sonnei (strain Ss046) protein is Disulfide bond formation protein B.